Consider the following 598-residue polypeptide: Vanadium-dependent bromoperoxidase (598 aa).

5 residues coordinate Ca(2+): Phe-361, Gln-363, Asp-365, Asp-368, and Gln-370. Residues Lys-400 and Arg-408 each contribute to the vanadate site. His-480 is an active-site residue. Ser-485, Gly-486, His-487, Arg-547, and His-553 together coordinate vanadate. The active site involves His-487.

The protein belongs to the vanadium-dependent haloperoxidase family. Homododecamer. Ca(2+) is required as a cofactor. It depends on vanadate as a cofactor.

The catalysed reaction is RH + Br(-) + H2O2 = RBr + 2 H2O.. In terms of biological role, catalyzes the halogenation of organic substrates in the presence of hydrogen peroxide. The sequence is that of Vanadium-dependent bromoperoxidase from Corallina officinalis (Coral seaweed).